The sequence spans 1407 residues: Transcription initiation factor TFIID subunit 2 (1407 aa).

T158 and T161 each carry phosphothreonine. S163 carries the post-translational modification Phosphoserine. The interval 252–336 (KLIGQNGEES…EERRNIEESN (85 aa)) is disordered. Positions 277-307 (GKPARVIKDEDKDSNLKNDEEGKNSKSKDAQ) are enriched in basic and acidic residues. Positions 304–337 (KDAQDNDEEEEEGESDEEEEEGEEERRNIEESNN) form a coiled coil. Residues 308–326 (DNDEEEEEGESDEEEEEGE) show a composition bias toward acidic residues. S318 carries the post-translational modification Phosphoserine. Residues 1285-1350 (EEGKLDIVIK…KVTSKQRKVK (66 aa)) form a highly charged region.

The protein belongs to the TAF2 family. In terms of assembly, the 1.2 MDa TFIID complex is composed of TATA binding protein (TBP) and the 14 TBP-associated factors. One copy of each TAF1, TAF2, TAF3, TAF7, TAF8, TAF11, TAF13, two copies of each TAF4, TAF5, TAF6, TAF9, TAF10, TAF12, and three copies of TAF14.

It localises to the nucleus. Functionally, functions as a component of the DNA-binding general transcription factor complex TFIID. Binding of TFIID to a promoter (with or without TATA element) is the initial step in pre-initiation complex (PIC) formation. TFIID plays a key role in the regulation of gene expression by RNA polymerase II through different activities such as transcription activator interaction, core promoter recognition and selectivity, TFIIA and TFIIB interaction, chromatin modification (histone acetylation by TAF1), facilitation of DNA opening and initiation of transcription. The chain is Transcription initiation factor TFIID subunit 2 (TAF2) from Saccharomyces cerevisiae (strain ATCC 204508 / S288c) (Baker's yeast).